The chain runs to 101 residues: RNA-binding protein Hfq (101 aa).

The 60-residue stretch at 9 to 68 (DPFLNALRRERVPVSIYLVNGIKLQGQVESFDQFVILLKNTVSQMVYKHAISTVVPSRPV) folds into the Sm domain. The interval 63–101 (VPSRPVSHHSNTPSGSTNNYHGSNPSAPQQPQQDSDDAE) is disordered. Residues 70–86 (HHSNTPSGSTNNYHGSN) show a composition bias toward polar residues.

Belongs to the Hfq family. Homohexamer.

Functionally, RNA chaperone that binds small regulatory RNA (sRNAs) and mRNAs to facilitate mRNA translational regulation in response to envelope stress, environmental stress and changes in metabolite concentrations. Also binds with high specificity to tRNAs. In Yersinia pseudotuberculosis serotype O:1b (strain IP 31758), this protein is RNA-binding protein Hfq.